Reading from the N-terminus, the 90-residue chain is Small ribosomal subunit protein bS18 (90 aa).

Positions 1-24 are disordered; it reads MKPMRQKPGRGQGNKSISNALASK.

This sequence belongs to the bacterial ribosomal protein bS18 family. In terms of assembly, part of the 30S ribosomal subunit. Forms a tight heterodimer with protein bS6.

Binds as a heterodimer with protein bS6 to the central domain of the 16S rRNA, where it helps stabilize the platform of the 30S subunit. The polypeptide is Small ribosomal subunit protein bS18 (Chlorobium phaeovibrioides (strain DSM 265 / 1930) (Prosthecochloris vibrioformis (strain DSM 265))).